A 603-amino-acid polypeptide reads, in one-letter code: Probable methyltransferase-like protein 25 (603 aa).

Residues threonine 326–glutamate 352 are disordered.

In terms of biological role, probable methyltransferase. This is Probable methyltransferase-like protein 25 (METTL25) from Homo sapiens (Human).